A 299-amino-acid polypeptide reads, in one-letter code: Oxygen-dependent coproporphyrinogen-III oxidase (299 aa).

Serine 92 contacts substrate. 2 residues coordinate a divalent metal cation: histidine 96 and histidine 106. The active-site Proton donor is the histidine 106. 108–110 lines the substrate pocket; that stretch reads NVR. Residues histidine 145 and histidine 175 each contribute to the a divalent metal cation site. Residues 240–275 form an important for dimerization region; the sequence is YVEFNLVWDRGTLFGLQTGGRTESILMSMPPLVRWE. 258-260 is a substrate binding site; it reads GGR.

This sequence belongs to the aerobic coproporphyrinogen-III oxidase family. As to quaternary structure, homodimer. It depends on a divalent metal cation as a cofactor.

It is found in the cytoplasm. It catalyses the reaction coproporphyrinogen III + O2 + 2 H(+) = protoporphyrinogen IX + 2 CO2 + 2 H2O. It functions in the pathway porphyrin-containing compound metabolism; protoporphyrin-IX biosynthesis; protoporphyrinogen-IX from coproporphyrinogen-III (O2 route): step 1/1. Functionally, involved in the heme biosynthesis. Catalyzes the aerobic oxidative decarboxylation of propionate groups of rings A and B of coproporphyrinogen-III to yield the vinyl groups in protoporphyrinogen-IX. This Enterobacter sp. (strain 638) protein is Oxygen-dependent coproporphyrinogen-III oxidase.